The sequence spans 863 residues: Ubiquitin carboxyl-terminal hydrolase 13 (863 aa).

Position 114 is a phosphoserine; by AURKB (serine 114). Threonine 122 is subject to Phosphothreonine. Residues proline 187–methionine 295 form a UBP-type; degenerate zinc finger. Cysteine 211, cysteine 214, cysteine 231, and histidine 244 together coordinate Zn(2+). Residue lysine 311 forms a Glycyl lysine isopeptide (Lys-Gly) (interchain with G-Cter in SUMO2) linkage. In terms of domain architecture, USP spans threonine 336 to isoleucine 861. Cysteine 345 serves as the catalytic Nucleophile. Lysine 405 is covalently cross-linked (Glycyl lysine isopeptide (Lys-Gly) (interchain with G-Cter in SUMO2)). UBA domains follow at residues aspartate 652–histidine 693 and glutamine 727–histidine 767. The active-site Proton acceptor is histidine 823.

Belongs to the peptidase C19 family. In terms of assembly, interacts with UFD1. Interacts (via UBA domains) with SIAH2 (when ubiquitinated). Interacts with BAG6; the interaction is direct and may mediate UBL4A deubiquitination. Interacts (via UBA 2 domain) with AMFR; the interaction is direct. Interacts with UBL4A; may be indirect via BAG6. Interacts with NEDD4. Post-translationally, phosphorylated by AURKB at Ser-114; leading to stabilization of cell cycle proteins such as SKP2 and AURKB, but not MCL1. As to expression, highly expressed in ovary and testes.

Its subcellular location is the cytoplasm. The enzyme catalyses Thiol-dependent hydrolysis of ester, thioester, amide, peptide and isopeptide bonds formed by the C-terminal Gly of ubiquitin (a 76-residue protein attached to proteins as an intracellular targeting signal).. With respect to regulation, specifically inhibited by spautin-1 (specific and potent autophagy inhibitor-1), a derivative of MBCQ that binds to USP13 and inhibits deubiquitinase activity. Regulated by PIK3C3/VPS34-containing complexes. The weak deubiquitinase activity in vitro suggests the existence of some mechanism that activates the enzyme. In terms of biological role, deubiquitinase that mediates deubiquitination of target proteins such as BECN1, MITF, SKP2 and USP10 and is involved in various processes such as autophagy, endoplasmic reticulum-associated degradation (ERAD), cell cycle progression or DNA damage response. Component of a regulatory loop that controls autophagy and p53/TP53 levels: mediates deubiquitination of BECN1, a key regulator of autophagy, leading to stabilize the PIK3C3/VPS34-containing complexes. Alternatively, forms with NEDD4 a deubiquitination complex, which subsequently stabilizes VPS34 to promote autophagy. Also deubiquitinates USP10, an essential regulator of p53/TP53 stability. In turn, PIK3C3/VPS34-containing complexes regulate USP13 stability, suggesting the existence of a regulatory system by which PIK3C3/VPS34-containing complexes regulate p53/TP53 protein levels via USP10 and USP13. Recruited by nuclear UFD1 and mediates deubiquitination of SKP2, thereby regulating endoplasmic reticulum-associated degradation (ERAD). Also regulates ERAD through the deubiquitination of UBL4A a component of the BAG6/BAT3 complex. Mediates stabilization of SIAH2 independently of deubiquitinase activity: binds ubiquitinated SIAH2 and acts by impairing SIAH2 autoubiquitination. Regulates the cell cycle progression by stabilizing cell cycle proteins such as SKP2 and AURKB. In addition, plays an important role in maintaining genomic stability and in DNA replication checkpoint activation via regulation of RAP80 and TOPBP1. Deubiquitinates the multifunctional protein HMGB1 and subsequently drives its nucleocytoplasmic localization and its secretion. Positively regulates type I and type II interferon signalings by deubiquitinating STAT1 but negatively regulates antiviral response by deubiquitinating STING1. The sequence is that of Ubiquitin carboxyl-terminal hydrolase 13 (USP13) from Homo sapiens (Human).